The sequence spans 470 residues: Synaptotagmin-17 (470 aa).

The tract at residues Pro54 to Arg112 is disordered. Residues Ser92–Arg112 are compositionally biased toward low complexity. A phosphoserine mark is found at Ser114 and Ser115. C2 domains are found at residues Gln180–Lys306 and Glu317–His451.

This sequence belongs to the synaptotagmin family.

It localises to the membrane. Its function is as follows. Plays a role in dendrite formation by melanocytes. The sequence is that of Synaptotagmin-17 (Syt17) from Mus musculus (Mouse).